The sequence spans 171 residues: Tetratricopeptide repeat protein 9C (171 aa).

3 TPR repeats span residues 8–41 (AQLY…LRGL), 72–107 (TDCY…QPEN), and 108–141 (AKAL…QPKD).

It belongs to the TTC9 family.

This Rattus norvegicus (Rat) protein is Tetratricopeptide repeat protein 9C (Ttc9c).